A 516-amino-acid polypeptide reads, in one-letter code: MADGDGSSVKKRRKKDKRSLPDEDVADIQHTEEFLIKPESRVAQLDTSQWPLLLKNFDKLNVLTTHYTPLPSGANPLKREISDYVRSGFINLDKPSNPSSHEVVAWIRRILRVEKTGHSGTLDPKVTGCLIVCIERATRLVKSQQSAGKEYVGIVRLHNAIESEAQLARAIETLTGALFQRPPLIAAVKRQLRVRTIYESKLVEYDPERRLGIFWVSCEAGTYIRTLCVHLGLLLGVGGQMQELRRVRSGILGEMDNMVTMHDVLDAQWQYDNNKDDSYLRRVILPLEKLLTSHKRLVMKDSAVNAICYGAKIMLPGVLRYEDGIELKQEIVVITTKGEAICLAIALMTTAVISTCDHGVVAKIKRVIMERDTYPRKWGLGPKASQKKMMIQKGLLDKHGKPNECTPDSWKKEYVDYRESSKKEAAKVPQAVSEVERAPKRKRESESENEAVSPPPSPATPPPEELSKKEKKKKKKEKKAKEAAESGEEQVEVISESSAKKKKKKKKQKEVEESSE.

A disordered region spans residues 1–24 (MADGDGSSVKKRRKKDKRSLPDED). The active-site Nucleophile is Asp-123. Positions 294–369 (HKRLVMKDSA…VVAKIKRVIM (76 aa)) constitute a PUA domain. The tract at residues 422-516 (KKEAAKVPQA…KQKEVEESSE (95 aa)) is disordered. Basic and acidic residues predominate over residues 434–446 (EVERAPKRKRESE). Over residues 453 to 464 (SPPPSPATPPPE) the composition is skewed to pro residues. The stretch at 463–516 (PEELSKKEKKKKKKEKKAKEAAESGEEQVEVISESSAKKKKKKKKQKEVEESSE) forms a coiled coil. The segment covering 469 to 478 (KEKKKKKKEK) has biased composition (basic residues).

Belongs to the pseudouridine synthase TruB family. In terms of assembly, part of the H/ACA small nucleolar ribonucleoprotein (H/ACA snoRNP) complex, which contains NHP2/NOLA2, GAR1/NOLA1, NOP10/NOLA3, and DKC1/NOLA4, which is presumed to be the catalytic subunit. The complex contains a stable core formed by binding of one or two NOP10-DKC1 heterodimers to NHP2; GAR1 subsequently binds to this core via DKC1. The complex binds a box H/ACA small nucleolar RNA (snoRNA), which may target the specific site of modification within the RNA substrate.

Its subcellular location is the nucleus. The protein localises to the nucleolus. The protein resides in the cajal body. It catalyses the reaction uridine in 5S rRNA = pseudouridine in 5S rRNA. Functionally, catalytic subunit of H/ACA small nucleolar ribonucleoprotein (H/ACA snoRNP) complex, which catalyzes pseudouridylation of rRNA. This involves the isomerization of uridine such that the ribose is subsequently attached to C5, instead of the normal N1. Each rRNA can contain up to 100 pseudouridine ('psi') residues, which may serve to stabilize the conformation of rRNAs. Required for ribosome biogenesis and telomere maintenance. This is H/ACA ribonucleoprotein complex subunit DKC1 (DKC1) from Gallus gallus (Chicken).